A 69-amino-acid chain; its full sequence is MSVLTPLLLRGLTGSARRLPMPCARVHSKPPREQLGTMDIAIGLTSCFVCFLLPSGWVLSHLENYKKRE.

Residues 1-25 (MSVLTPLLLRGLTGSARRLPMPCAR) constitute a mitochondrion transit peptide. The SIFI-degron signature appears at 2–19 (SVLTPLLLRGLTGSARRL). The Mitochondrial matrix segment spans residues 26–36 (VHSKPPREQLG). The chain crosses the membrane as a helical span at residues 37 to 60 (TMDIAIGLTSCFVCFLLPSGWVLS). Residues 61 to 69 (HLENYKKRE) are Mitochondrial intermembrane-facing.

This sequence belongs to the cytochrome c oxidase VIII family. As to quaternary structure, component of the cytochrome c oxidase (complex IV, CIV), a multisubunit enzyme composed of 14 subunits. The complex is composed of a catalytic core of 3 subunits MT-CO1, MT-CO2 and MT-CO3, encoded in the mitochondrial DNA, and 11 supernumerary subunits COX4I, COX5A, COX5B, COX6A, COX6B, COX6C, COX7A, COX7B, COX7C, COX8 and NDUFA4, which are encoded in the nuclear genome. The complex exists as a monomer or a dimer and forms supercomplexes (SCs) in the inner mitochondrial membrane with NADH-ubiquinone oxidoreductase (complex I, CI) and ubiquinol-cytochrome c oxidoreductase (cytochrome b-c1 complex, complex III, CIII), resulting in different assemblies (supercomplex SCI(1)III(2)IV(1) and megacomplex MCI(2)III(2)IV(2)). Post-translationally, in response to mitochondrial stress, the precursor protein is ubiquitinated by the SIFI complex in the cytoplasm before mitochondrial import, leading to its degradation. Within the SIFI complex, UBR4 initiates ubiquitin chain that are further elongated or branched by KCMF1.

The protein localises to the mitochondrion inner membrane. It participates in energy metabolism; oxidative phosphorylation. Component of the cytochrome c oxidase, the last enzyme in the mitochondrial electron transport chain which drives oxidative phosphorylation. The respiratory chain contains 3 multisubunit complexes succinate dehydrogenase (complex II, CII), ubiquinol-cytochrome c oxidoreductase (cytochrome b-c1 complex, complex III, CIII) and cytochrome c oxidase (complex IV, CIV), that cooperate to transfer electrons derived from NADH and succinate to molecular oxygen, creating an electrochemical gradient over the inner membrane that drives transmembrane transport and the ATP synthase. Cytochrome c oxidase is the component of the respiratory chain that catalyzes the reduction of oxygen to water. Electrons originating from reduced cytochrome c in the intermembrane space (IMS) are transferred via the dinuclear copper A center (CU(A)) of subunit 2 and heme A of subunit 1 to the active site in subunit 1, a binuclear center (BNC) formed by heme A3 and copper B (CU(B)). The BNC reduces molecular oxygen to 2 water molecules using 4 electrons from cytochrome c in the IMS and 4 protons from the mitochondrial matrix. This Nycticebus coucang (Slow loris) protein is Cytochrome c oxidase subunit 8A, mitochondrial (COX8A).